An 88-amino-acid chain; its full sequence is MDIDNKPRIHWACRRGMRELDISIMPFFEHDYDTLSDDDKRNFIRLLQCDDPDLFNWLMNHGEPTDQGLKHMVSLIQTRNKNRGPVAM.

The protein belongs to the SdhE FAD assembly factor family. In terms of assembly, monomer. Makes weak or transient interactions with SdhA. Interacts with YgfX. Interacts with FrdA.

Its subcellular location is the cytoplasm. Its pathway is antibiotic biosynthesis; prodigiosin biosynthesis. Functionally, an FAD assembly protein, which accelerates covalent attachment of the cofactor into other proteins. Plays an essential role in the assembly of succinate dehydrogenase (SDH, respiratory complex II), an enzyme complex that is a component of both the tricarboxylic acid cycle and the electron transport chain, and which couples the oxidation of succinate to fumarate with the reduction of ubiquinone (coenzyme Q) to ubiquinol. Required for flavinylation (covalent attachment of FAD) of the flavoprotein subunit SdhA of SDH. Required for flavinylation of the flavoprotein subunit FrdA of fumarate reductase (FRD). Flavinylation of SDH and FRD occurs in a similar but not identical manner, as site-specific mutations display subtle differences between them. Flavinylates SdhA in vivo in the absence of the other SDH subunits; SdhE mutants that do not flavinylate also interfere with wild-type activity in a possible dominant-negative fashion. Weakly binds to FAD and facilitates its binding to SdhA. Required for production of prodigiosin antibiotic (Pig); overproduction of SdhE in a deletion mutant leads to decreased synthesis of Pig compared to wild-type. Capable of flavinylating A.pasteurianus SdhA when the SDH operon and this gene are expressed in G.oxydans; flavinylation of SdhA is detected only in the presence of sdhE. The chain is FAD assembly factor SdhE from Serratia sp. (strain ATCC 39006) (Prodigiosinella confusarubida).